Here is a 278-residue protein sequence, read N- to C-terminus: Neuronal membrane glycoprotein M6-a (278 aa).

At Met-1 the chain carries N-acetylmethionine. The Cytoplasmic segment spans residues 1 to 22 (MEENMEEGQTQKGCFECCIKCL). The helical transmembrane segment at 23-43 (GGIPYASLIATILLYAGVALF) threads the bilayer. Residues 44 to 84 (CGCGHEALSGTVNILQTYFEMARTAGDTLDVFTMIDIFKYV) lie on the Extracellular side of the membrane. Residues 85-105 (IYGIAAAFFVYGILLMVEGFF) traverse the membrane as a helical segment. Residues 106–127 (TTGAIKDLYGDFKITTCGRCVS) are Cytoplasmic-facing. Residues 128–148 (AWFIMLTYLFMLAWLGVTAFT) traverse the membrane as a helical segment. The Extracellular portion of the chain corresponds to 149–213 (SLPVYMYFNL…STELNMTFHL (65 aa)). Asn-164 carries N-linked (GlcNAc...) asparagine glycosylation. A disulfide bond links Cys-174 and Cys-192. A glycan (N-linked (GlcNAc...) asparagine) is linked at Asn-208. Residues 214–234 (FIVALAGAGAAVIAMVHYLMV) traverse the membrane as a helical segment. The Cytoplasmic portion of the chain corresponds to 235 to 278 (LSANWAYVKDACRMQKYEDIKSKEEQELHDIHSTRSKERLNAYT). Ser-256 bears the Phosphoserine mark. Thr-278 is modified (phosphothreonine).

This sequence belongs to the myelin proteolipid protein family. Interacts with OPRM1. Interacts with palmitoyltransferase ZDHHC17/HIP14; the interaction leads to palmitoylation of GPM6A. In terms of processing, N-glycosylated. Palmitoylated by ZDHHC17/HIP14.

Its subcellular location is the cell membrane. It localises to the cell projection. The protein resides in the axon. It is found in the growth cone. The protein localises to the dendritic spine. Its subcellular location is the filopodium. It localises to the neuron projection. In terms of biological role, involved in neuronal differentiation, including differentiation and migration of neuronal stem cells. Plays a role in neuronal plasticity and is involved in neurite and filopodia outgrowth, filopodia motility and probably synapse formation. GPM6A-induced filopodia formation involves mitogen-activated protein kinase (MAPK) and Src signaling pathways. May be involved in neuronal NGF-dependent Ca(2+) influx. May be involved in regulation of endocytosis and intracellular trafficking of G-protein-coupled receptors (GPCRs); may enhance internalization and recycling of mu-type opioid receptor. The chain is Neuronal membrane glycoprotein M6-a (GPM6A) from Bos taurus (Bovine).